Consider the following 246-residue polypeptide: Envelope glycoprotein gp95 (246 aa).

The Extracellular portion of the chain corresponds to 1 to 192; it reads IPSRPVGGPC…EWAVHLLKGL (192 aa). The N-linked (GlcNAc...) asparagine; by host glycan is linked to N31. A disulfide bridge links C50 with C86. Positions 58–78 are fusion peptide; the sequence is GPTARIFASILAPGVAAAQAL. A coiled-coil region spans residues 75-125; the sequence is AQALKEIERLACWSVKQANLTTSLLGDLLDDVTSIRHAVLQNRAAIDFLLL. An N-linked (GlcNAc...) asparagine; by host glycan is attached at N93. The segment at 114–130 is immunosuppression; it reads LQNRAAIDFLLLAHGHG. A disulfide bridge links C131 with C138. N-linked (GlcNAc...) asparagine; by host glycosylation occurs at N141. Positions 143 to 173 form a coiled coil; it reads SDHSESIQKKFQLMKEHVNKIGVDSDPIGSW. The chain crosses the membrane as a helical span at residues 193–213; it reads LLGLVVILLLVVCLPCLLQIV. S-palmitoyl cysteine; by host attachment occurs at residues C205 and C208. The Cytoplasmic portion of the chain corresponds to 214-246; the sequence is CGNIRKMINNSISYHTEYKKLQKAYGQPESRIV.

It belongs to the Alpharetroviruses envelope glycoprotein family. In terms of assembly, heterodimer with the transmembrane protein. The mature envelope protein (Env) consists of a trimer of SU-TM heterodimers attached by a labile interchain disulfide bond. Heterodimer with the surface protein. The mature envelope protein (Env) consists of a trimer of SU-TM heterodimers attached by a labile interchain disulfide bond. Specific enzymatic cleavages in vivo yield mature proteins. Envelope glycoproteins are synthesized as an inactive precursor that is N-glycosylated and processed likely by host cell furin or by a furin-like protease in the Golgi to yield the mature SU and TM proteins. The cleavage site between SU and TM requires the minimal sequence [KR]-X-[KR]-R. Post-translationally, the transmembrane protein is palmitoylated. Palmitoylation is necessary for glycoprotein function and infectivity.

It localises to the virion membrane. The protein localises to the host cell membrane. Its function is as follows. The surface protein (SU) attaches the virus to the host cell by binding to its receptor. This interaction triggers the refolding of the transmembrane protein (TM) thereby unmasking its fusion peptide and the formation of a reactive thiolate to activate its fusogenic potential. Fusion occurs at the host cell plasma membrane. The transmembrane protein (TM) acts as a class I viral fusion protein. Under the current model, the protein has at least 3 conformational states: pre-fusion native state, pre-hairpin intermediate state, and post-fusion hairpin state. During viral and target cell membrane fusion, the coiled coil regions (heptad repeats) assume a trimer-of-hairpins structure, positioning the fusion peptide in close proximity to the C-terminal region of the ectodomain. The formation of this structure appears to drive apposition and subsequent fusion of viral and target cell membranes. Membranes fusion leads to delivery of the nucleocapsid into the cytoplasm. The protein is Envelope glycoprotein gp95 (env) of Galliformes.